The sequence spans 199 residues: Ribonuclease P protein subunit p25 (199 aa).

Basic and acidic residues predominate over residues 1–11 (MENFRKVRSEE). Disordered stretches follow at residues 1-31 (MENF…FADL) and 146-199 (PRQL…DRTA). S172 is modified (phosphoserine). Residues 190-199 (PEAENEDRTA) show a composition bias toward acidic residues.

This sequence belongs to the histone-like Alba family. In terms of assembly, component of nuclear RNase P and RNase MRP ribonucleoproteins. RNase P consists of a catalytic RNA moiety and 10 different protein chains; POP1, POP4, POP5, POP7, RPP14, RPP21, RPP25, RPP30, RPP38 and RPP40. Within the RNase P complex, POP1, POP7 and RPP25 form the 'finger' subcomplex, POP5, RPP14, RPP40 and homodimeric RPP30 form the 'palm' subcomplex, and RPP21, POP4 and RPP38 form the 'wrist' subcomplex. All subunits of the RNase P complex interact with the catalytic RNA. Several subunits of RNase P are also part of the RNase MRP complex. RNase MRP consists of a catalytic RNA moiety and about 8 protein subunits; POP1, POP7, RPP25, RPP30, RPP38, RPP40 and possibly also POP4 and POP5. POP7 forms a heterodimer with RPP25 that binds to the P3 stem loop of the catalytic RNA.

The protein localises to the nucleus. The protein resides in the nucleolus. Functionally, component of ribonuclease P, a ribonucleoprotein complex that generates mature tRNA molecules by cleaving their 5'-ends. Also a component of the MRP ribonuclease complex, which cleaves pre-rRNA sequences. In Mus musculus (Mouse), this protein is Ribonuclease P protein subunit p25 (Rpp25).